The sequence spans 197 residues: Scoloptoxin SSD20 (197 aa).

An N-terminal signal peptide occupies residues 1–6 (PPMTTE).

Expressed by the venom gland.

It is found in the secreted. Functionally, may act as a voltage-gated potassium channel inhibitor. Is highly similar to the subunit beta of SSD14 which, when complexed with subunit alpha, induces platelet aggregation and hemolysis. The sequence is that of Scoloptoxin SSD20 from Scolopendra dehaani (Thai centipede).